Reading from the N-terminus, the 323-residue chain is L-lactate dehydrogenase 1 (323 aa).

NAD(+) is bound by residues valine 17, aspartate 38, arginine 43, tyrosine 68, and 82–83 (GA). Glutamine 85 and arginine 91 together coordinate substrate. NAD(+)-binding positions include serine 104, 121 to 123 (AAN), and serine 146. 123–126 (NPVD) contacts substrate. Substrate is bound at residue 151–154 (DTGR). The active-site Proton acceptor is histidine 178. A Phosphotyrosine modification is found at tyrosine 223. Threonine 232 is a binding site for substrate.

It belongs to the LDH/MDH superfamily. LDH family. As to quaternary structure, homotetramer.

It localises to the cytoplasm. The catalysed reaction is (S)-lactate + NAD(+) = pyruvate + NADH + H(+). Its pathway is fermentation; pyruvate fermentation to lactate; (S)-lactate from pyruvate: step 1/1. In terms of biological role, catalyzes the conversion of lactate to pyruvate. In Lactobacillus johnsonii (strain CNCM I-12250 / La1 / NCC 533), this protein is L-lactate dehydrogenase 1.